The chain runs to 265 residues: Undecaprenyl-diphosphatase (265 aa).

A run of 7 helical transmembrane segments spans residues 38–58, 80–100, 107–127, 135–155, 175–195, 213–233, and 244–264; these read SDMFNIVIQAGAILAVTIIYW, LIVAFLITAILGLVVKKLGFE, PIAWALIIGGIWMIFAEWAAA, ITWLVAILVGIAQIVAGVFPG, AAATEFAFLVGIPTMYAASGY, ALAIAFIVSTIVAFIAVKWLL, and FAIYRIILGVLLLGMATSGLI.

Belongs to the UppP family.

The protein resides in the cell inner membrane. It catalyses the reaction di-trans,octa-cis-undecaprenyl diphosphate + H2O = di-trans,octa-cis-undecaprenyl phosphate + phosphate + H(+). Catalyzes the dephosphorylation of undecaprenyl diphosphate (UPP). Confers resistance to bacitracin. This chain is Undecaprenyl-diphosphatase, found in Rhizobium etli (strain CIAT 652).